Reading from the N-terminus, the 1025-residue chain is Error-prone DNA polymerase (1025 aa).

This sequence belongs to the DNA polymerase type-C family. DnaE2 subfamily.

Its subcellular location is the cytoplasm. The catalysed reaction is DNA(n) + a 2'-deoxyribonucleoside 5'-triphosphate = DNA(n+1) + diphosphate. Functionally, DNA polymerase involved in damage-induced mutagenesis and translesion synthesis (TLS). It is not the major replicative DNA polymerase. This is Error-prone DNA polymerase from Alkalilimnicola ehrlichii (strain ATCC BAA-1101 / DSM 17681 / MLHE-1).